Here is an 874-residue protein sequence, read N- to C-terminus: Isopimaradiene synthase, chloroplastic (874 aa).

Positions 1–12 are enriched in polar residues; it reads MALPSSSLSSRI. The interval 1–20 is disordered; that stretch reads MALPSSSLSSRIPTGPHPLT. The N-terminal 37 residues, 1 to 37, are a transit peptide targeting the chloroplast; sequence MALPSSSLSSRIPTGPHPLTHTQCIPHFSTTINAGIS. Mg(2+) is bound by residues aspartate 407, aspartate 409, aspartate 626, aspartate 630, asparagine 770, and glutamate 778. Positions 407–410 match the DXDD motif motif; the sequence is DIDD. Positions 626–630 match the DDXXD motif motif; sequence DDLYD.

This sequence belongs to the terpene synthase family. Tpsd subfamily. Mg(2+) serves as cofactor. The cofactor is Mn(2+).

The protein resides in the plastid. The protein localises to the chloroplast. It carries out the reaction (+)-copalyl diphosphate = isopimara-8(14),15-diene + diphosphate. It participates in terpene metabolism; oleoresin biosynthesis. Terpene synthase (TPS) involved in the biosynthesis of diterpene natural products included in conifer oleoresin secretions and volatile emissions; these compounds contribute to biotic and abiotic stress defense against herbivores and pathogens. Catalyzes the conversion of (+)-copalyl diphosphate ((+)-CPP) to isopimaradiene. In Picea sitchensis (Sitka spruce), this protein is Isopimaradiene synthase, chloroplastic.